The sequence spans 391 residues: Multidrug resistance protein MdtL (391 aa).

Helical transmembrane passes span 4-24 (FLICSFALVLLYPAGIDMYLV), 42-62 (IAFSVYLAGMAAAMLFAGKVA), 69-89 (PVAIPGAALFIIASVFCSLAE), 93-113 (LFLAGRFLQGLGAGCCYVVAF), 131-151 (LLNGITCIIPVLAPVLGHLIM), 158-178 (SLFWTMATMGIAVLMLSLFIL), 203-222 (FFLSRVVITTLSVSVILTFV), 245-265 (ALTAGVSMTVSFSTPFALGIF), 269-289 (TLMITSQVLFLAAGITLAVSP), 293-313 (VSLFGITLICAGFSVGFGVAM), 331-351 (LGIAQVCGSSLWIWLAAVVGI), and 356-376 (MLIGILIACSIVSLLLIMFVA).

Belongs to the major facilitator superfamily. DHA1 family. MdtL (TC 2.A.1.2.22) subfamily.

The protein localises to the cell inner membrane. Its function is as follows. Confers resistance to chloramphenicol. This Escherichia coli (strain SMS-3-5 / SECEC) protein is Multidrug resistance protein MdtL.